The chain runs to 1612 residues: Replicase large subunit (1612 aa).

A methyltransferase region spans residues 50-452 (FSKVISQEQI…DKSVLQALSM (403 aa)). The 209-residue stretch at 72–280 (TFYNTQLAVH…HSYKNVIKYV (209 aa)) folds into the Alphavirus-like MT domain. One can recognise a (+)RNA virus helicase ATP-binding domain in the interval 794–953 (LIYSDMGKLQ…TLVYDHREVR (160 aa)). The helicase stretch occupies residues 822 to 1080 (TLVDGVPGCG…TRHTKSFKYY (259 aa)). 826-833 (GVPGCGKT) contacts ATP. The (+)RNA virus helicase C-terminal domain occupies 954-1112 (RLSLRCPADV…DMYKVDAGIL (159 aa)). Residues 1374-1487 (MEVLELDISK…YIPKGLDLPD (114 aa)) form the RdRp catalytic domain.

It belongs to the ssRNA positive-strand viruses RNA-directed RNA polymerase family. In terms of assembly, heterodimer of a large and a small subunit.

The catalysed reaction is RNA(n) + a ribonucleoside 5'-triphosphate = RNA(n+1) + diphosphate. It catalyses the reaction ATP + H2O = ADP + phosphate + H(+). Is an RNA-dependent RNA polymerase active in viral RNA replication. In terms of biological role, is a methyltransferase active in RNA capping and an RNA helicase. Methyltransferase displays a cytoplasmic capping enzyme activity. This function is necessary since all viral RNAs are synthesized in the cytoplasm, and host capping enzymes are restricted to the nucleus. Helicase region probably exhibits NTPase and RNA unwinding activities (Potential). It also acts as a suppressor of RNA-mediated gene silencing, also known as post-transcriptional gene silencing (PTGS), a mechanism of plant viral defense that limits the accumulation of viral RNAs. May mediate silencing suppression through either inhibition of HEN1-mediated siRNA or siRNA demethylation. The polypeptide is Replicase large subunit (Cymbidium (ORSV-Cy)).